The primary structure comprises 399 residues: Organelle RRM domain-containing protein 1, chloroplastic (399 aa).

A chloroplast-targeting transit peptide spans 1–52 (MDAARASLLLAGGLAVSTSTSAVATAAQTVSIPHLSPHTRRRRQRRFLRLAS). The RRM domain maps to 295 to 373 (KRLFVTGLSF…WMIVVDVAKH (79 aa)). Residues 377-399 (DRQPPYSASGRSNQVLRSRYHTG) form a disordered region.

It localises to the plastid. The protein resides in the chloroplast. Functionally, involved in C-to-U editing of chloroplastic RNA. Functions as major chloroplastic editing factor. Controls a majority of the chloroplastic editing sites. This is Organelle RRM domain-containing protein 1, chloroplastic from Oryza sativa subsp. japonica (Rice).